The primary structure comprises 391 residues: Alkanesulfonate monooxygenase (391 aa).

The protein belongs to the SsuD family.

The enzyme catalyses an alkanesulfonate + FMNH2 + O2 = an aldehyde + FMN + sulfite + H2O + 2 H(+). Functionally, catalyzes the desulfonation of aliphatic sulfonates. The sequence is that of Alkanesulfonate monooxygenase from Methylorubrum extorquens (strain CM4 / NCIMB 13688) (Methylobacterium extorquens).